Reading from the N-terminus, the 170-residue chain is Lipoprotein signal peptidase (170 aa).

A run of 3 helical transmembrane segments spans residues 9-29, 72-92, and 93-113; these read IGSVIFIFILVFIDQWSKYLV, LFFLVIPIIILVFVFCFILKE, and TNKIARIALILILSGGIGNII. Residues aspartate 124 and aspartate 146 contribute to the active site. The chain crosses the membrane as a helical span at residues 142-162; sequence FNFADSYVVIGITLFIIYDLF.

Belongs to the peptidase A8 family.

The protein localises to the cell inner membrane. It catalyses the reaction Release of signal peptides from bacterial membrane prolipoproteins. Hydrolyzes -Xaa-Yaa-Zaa-|-(S,diacylglyceryl)Cys-, in which Xaa is hydrophobic (preferably Leu), and Yaa (Ala or Ser) and Zaa (Gly or Ala) have small, neutral side chains.. Its pathway is protein modification; lipoprotein biosynthesis (signal peptide cleavage). Functionally, this protein specifically catalyzes the removal of signal peptides from prolipoproteins. The protein is Lipoprotein signal peptidase of Borrelia hermsii (strain HS1 / DAH).